Reading from the N-terminus, the 105-residue chain is UPF0473 protein SAG2089 (105 aa).

The protein belongs to the UPF0473 family.

The protein is UPF0473 protein SAG2089 of Streptococcus agalactiae serotype V (strain ATCC BAA-611 / 2603 V/R).